Here is a 306-residue protein sequence, read N- to C-terminus: Glutamyl-Q tRNA(Asp) synthetase (306 aa).

Residues 4 to 8 (RYAPS) and E40 each bind L-glutamate. Residues 7–17 (PSPSGDLHFGN) carry the 'HIGH' region motif. Zn(2+)-binding residues include C92, C94, Y113, and C117. L-glutamate contacts are provided by Y180 and R198. Residues 236 to 240 (RLAKR) carry the 'KMSKS' region motif. K239 provides a ligand contact to ATP.

Belongs to the class-I aminoacyl-tRNA synthetase family. GluQ subfamily. It depends on Zn(2+) as a cofactor.

Functionally, catalyzes the tRNA-independent activation of glutamate in presence of ATP and the subsequent transfer of glutamate onto a tRNA(Asp). Glutamate is transferred on the 2-amino-5-(4,5-dihydroxy-2-cyclopenten-1-yl) moiety of the queuosine in the wobble position of the QUC anticodon. This chain is Glutamyl-Q tRNA(Asp) synthetase, found in Corynebacterium efficiens (strain DSM 44549 / YS-314 / AJ 12310 / JCM 11189 / NBRC 100395).